Here is a 121-residue protein sequence, read N- to C-terminus: Large ribosomal subunit protein uL18 (121 aa).

It belongs to the universal ribosomal protein uL18 family. In terms of assembly, part of the 50S ribosomal subunit; part of the 5S rRNA/L5/L18/L25 subcomplex. Contacts the 5S and 23S rRNAs.

Functionally, this is one of the proteins that bind and probably mediate the attachment of the 5S RNA into the large ribosomal subunit, where it forms part of the central protuberance. This is Large ribosomal subunit protein uL18 from Geobacter metallireducens (strain ATCC 53774 / DSM 7210 / GS-15).